The sequence spans 638 residues: MSKTPLLDTIRTPEDLRKLRVDQVQQVADELRQETIDAVSVTGGHFGAGLGVVELTTAIHYVFDTPRDRLIWDVGHQAYPHKILTGRRDRIRTLRTAGGLSGFTKRTESDYDPFGAAHSSTSISAGLGMAVARDLAGGNNNVIAVIGDGSISAGMAYEAMNNAGAMNSRLIVILNDNNMSIAPPVGAMSAYLSRLYSGKTYRSLREAGKQIGKHLPKLIADRAARAEEYSRGFMMGGGTLFEELGFYYVGPIDGHNLDHLLPILQNVRDAETGPFLIHVVTQKGKGYAPAEAASDKYHAVVKFDIATGTQAKAKSNAPSYQNVFGQSLVKEAAKDDKIVGITAAMPSGTGIDIFEKAFPARTFDVGIAEQHAVTFAAGLATEGYKPFCAIYSTFLQRAYDQVVHDVALQSLPVRFAIDRAGLVGADGATHAGSFDNAYLGCLPNMVIMAASDEAELVHMVATQVAINDRPSALRYPRGEGRGVEMPDVGVPLEIGKGRVIRQGNKVALLSFGTRLAECEKAAEELAALGLSTTVADARFMKPLDVDLVLKLANEHEILITIEEGSIGGFGTHVMQTLAEHGKLDGEVKMRAMVLPDVFLDHDTPTAMYANAGLDAKAIVKKVFEALGKEHKAETVKLA.

Thiamine diphosphate contacts are provided by residues His76 and 117–119 (AHS). Asp148 lines the Mg(2+) pocket. Thiamine diphosphate contacts are provided by residues 149–150 (GS), Asn177, Tyr287, and Glu369. Asn177 provides a ligand contact to Mg(2+).

It belongs to the transketolase family. DXPS subfamily. As to quaternary structure, homodimer. The cofactor is Mg(2+). Thiamine diphosphate is required as a cofactor.

It carries out the reaction D-glyceraldehyde 3-phosphate + pyruvate + H(+) = 1-deoxy-D-xylulose 5-phosphate + CO2. It functions in the pathway metabolic intermediate biosynthesis; 1-deoxy-D-xylulose 5-phosphate biosynthesis; 1-deoxy-D-xylulose 5-phosphate from D-glyceraldehyde 3-phosphate and pyruvate: step 1/1. Catalyzes the acyloin condensation reaction between C atoms 2 and 3 of pyruvate and glyceraldehyde 3-phosphate to yield 1-deoxy-D-xylulose-5-phosphate (DXP). This Rhodopseudomonas palustris (strain BisB5) protein is 1-deoxy-D-xylulose-5-phosphate synthase.